Reading from the N-terminus, the 303-residue chain is Probable cell division protein WhiA (303 aa).

Residues 272–303 (SIQQLADSLSTPLTKSGVNHRLRKINKIADEL) constitute a DNA-binding region (H-T-H motif).

The protein belongs to the WhiA family.

In terms of biological role, involved in cell division and chromosome segregation. This chain is Probable cell division protein WhiA, found in Streptococcus pneumoniae (strain Hungary19A-6).